A 208-amino-acid polypeptide reads, in one-letter code: Probable transcriptional regulator ycf29 (208 aa).

Residues 11 to 118 (KLILIEPEEH…ELIAIISNLI (108 aa)) form the Response regulatory domain. D60 is modified (4-aspartylphosphate). An HTH luxR-type domain is found at 146–208 (TSFSYINLTV…NRIQILSYFN (63 aa)).

Its subcellular location is the plastid. It is found in the chloroplast. This chain is Probable transcriptional regulator ycf29 (ycf29), found in Guillardia theta (Cryptophyte).